Here is a 47-residue protein sequence, read N- to C-terminus: Photosystem II reaction center protein K (47 aa).

A propeptide spanning residues 1–10 (MALINFDLLA) is cleaved from the precursor. A helical transmembrane segment spans residues 26–46 (LPLIPLFFFLLVFVWQAAVGF).

It belongs to the PsbK family. In terms of assembly, PSII is composed of 1 copy each of membrane proteins PsbA, PsbB, PsbC, PsbD, PsbE, PsbF, PsbH, PsbI, PsbJ, PsbK, PsbL, PsbM, PsbT, PsbX, PsbY, Psb30/Ycf12, peripheral proteins PsbO, CyanoQ (PsbQ), PsbU, PsbV and a large number of cofactors. It forms dimeric complexes.

It localises to the cellular thylakoid membrane. In terms of biological role, one of the components of the core complex of photosystem II (PSII). PSII is a light-driven water:plastoquinone oxidoreductase that uses light energy to abstract electrons from H(2)O, generating O(2) and a proton gradient subsequently used for ATP formation. It consists of a core antenna complex that captures photons, and an electron transfer chain that converts photonic excitation into a charge separation. The polypeptide is Photosystem II reaction center protein K (Prochlorococcus marinus (strain NATL1A)).